The sequence spans 538 residues: Xylosidase/arabinosidase 43B (538 aa).

Residue glutamate 367 is the Proton donor of the active site.

The protein belongs to the glycosyl hydrolase 43 family.

The catalysed reaction is Hydrolysis of (1-&gt;4)-beta-D-xylans, to remove successive D-xylose residues from the non-reducing termini.. It catalyses the reaction Hydrolysis of terminal non-reducing alpha-L-arabinofuranoside residues in alpha-L-arabinosides.. Activity is inhibited by Ag(+), Li(+), Cu(2+), Cr(3+), Co(3+), Ni(2+), Mg(2+), Zn(2+), EDTA, SDS and beta-mercaptoethanol; but not by Mn(2+), Pb(2+), Ca(2+) and Fe(3+). Functionally, bifunctional beta-xylosidase/alpha-L-arabinosidases with a low level of xylanase activity. Is most active on 4-nitrophenyl beta-D-xylopyranoside (pNPX) (defined as 100%), moderate on p-nitrophenyl-alpha-L-arabinofuranoside (pNPA) (56.6%), and weak on beechwood xylan (5.7%) and birchwood xylan (2.7%). Is able to attack xylooligosacchardies with degrees of polymerisation of 2-5, releasing the amounts of reducing sugars in the order of xylopentose &gt; xylotetraose &gt; xylotriose &gt; xylobiose, i.e. the rate of xylose released from xylooligosacchardies increased with the chain length. No activity was detected in the presence of carboxymethyl cellulose-sodium (CMC-Na), sugar beet arabinan, AZCL-arabinan (debranched), 4-nitrophenyl a-D - galactopyranoside, 2-nitrophenyl beta-D-galactopyranoside, and 4-nitrophenyl alpha-D-glucopyranoside. The polypeptide is Xylosidase/arabinosidase 43B (Humicola insolens (Soft-rot fungus)).